The sequence spans 146 residues: Snake venom vascular endothelial growth factor toxin (146 aa).

The signal sequence occupies residues 1–24 (MAVYLLAVAILFCIQGWPLGTVQG). Pyrrolidone carboxylic acid is present on Gln-25. 3 cysteine pairs are disulfide-bonded: Cys-38/Cys-80, Cys-69/Cys-115, and Cys-73/Cys-117. Residues 118 to 146 (RPRSASGVNSRKHKRNPEEGEPRAKFPFV) form a disordered region. Over residues 133–146 (NPEEGEPRAKFPFV) the composition is skewed to basic and acidic residues.

It belongs to the PDGF/VEGF growth factor family. Snake venom VEGF subfamily. Homodimer; disulfide-linked. Interacts with VEGF receptor-1 (FLT1) with a high affinity, whereas it binds to VEGF receptor-2 (KDR) with a low affinity. Does not bind VEGF receptor-3 (FLT4). Expressed by the venom gland.

It is found in the secreted. Functionally, snake venom VEGFs that may contribute to venom dispersion and prey subjugation by inducing vascular permeability and hypotension. This protein induces an increase in capillary permeability after intradermal injection, as well as a drastic hypotensive effect after intravenous injection. The hypotension is mediated by nitric oxide (NO), which is produced by VEGF-activated endothelium NO synthase. Also induces angiogenesis in vitro. Like other crotalid VEGFs, this protein interacts with VEGF receptor-1 (FLT1) with a high affinity, whereas it binds to VEGF receptor-2 (KDR) with a low affinity. The chain is Snake venom vascular endothelial growth factor toxin from Bothrops jararaca (Jararaca).